Reading from the N-terminus, the 372-residue chain is Envelope phospholipase OPG057 (372 aa).

A YPPL motif is present at residues 153 to 156; the sequence is YPPL. S-palmitoyl cysteine; by host attachment occurs at residues cysteine 185 and cysteine 186. The region spanning 307–334 is the PLD phosphodiesterase domain; sequence FTIQNNTKLLIVDDEYVHITSANFDGTH.

The protein belongs to the orthopoxvirus OPG057 family. Interacts with protein OPG190/B5. Palmitoylated. Attachment of the palmitate moiety is essential for correct intracellular targeting and protein function.

The protein localises to the virion membrane. Its subcellular location is the host Golgi apparatus. The protein resides in the host trans-Golgi network. It localises to the host endoplasmic reticulum membrane. The catalysed reaction is a 1,2-diacyl-sn-glycero-3-phosphocholine + H2O = a 1,2-diacyl-sn-glycero-3-phosphate + choline + H(+). In terms of biological role, major envelope protein that plays a role in the biogenesis of the viral double membrane and in egress of virus from the host cell. Produces the wrapped form of virus that is required for cell-to-cell spread. Acts as a lipase with broad specificity including phospholipase C, phospholipase A, and triacylglycerol lipase activities. The protein is Envelope phospholipase OPG057 (OPG057) of Vaccinia virus (strain Western Reserve) (VACV).